A 588-amino-acid polypeptide reads, in one-letter code: MTLFQVYTRALRYLTVHKWRVAVVVIANVILAAITIAEPVLFGRIIDAISSGTNVTPILILWAGFGVFNTVAYVAVAREADRLAHGRRATLLTEAFGRIISMPLSWHHLRGTSNALHTLLRASETLFGLWLEFMRTHLATFVALVLLIPTAMAMDLRLSFVLIGLGIVYWFIGKWVMGRTKDGQASVEEHYHSVFAHVSDSISNVSVLHSYNRIEAETKALKSFTEKLLSAQYPVLDWWAFASALNRTASTVSMMIILVIGTVLVKNGELRVGDVIAFIGFANLLIGRLDQMRQFVTQIFEARAKLEDFFVLEDAVKEREEPGDARELSNVSGTVEFRNINFGFANTKQGVHDVSFTAKAGETVAIVGPTGAGKTTLINLLQRVYDPDSGQILIDGTDISTVTKNSLRNSIATVFQDAGLLNRSIRENIRLGRETATDAEVVEAAAAAAATDFIDSRINGYLTQVGERGNRLSGGERQRIAIARAILKNAPILVLDEATSALDVETEARVKAAVDALRKNRTTFIIAHRLSTVRDADLVLFLDQGRIIEKGTFDELTQRGGRFTSLLRTSGLLTEDEGQQPRPKAIAS.

The 281-residue stretch at 21–301 folds into the ABC transmembrane type-1 domain; the sequence is VAVVVIANVI…MRQFVTQIFE (281 aa). The next 6 membrane-spanning stretches (helical) occupy residues 22 to 42, 57 to 77, 136 to 156, 158 to 178, 248 to 268, and 272 to 292; these read AVVV…PVLF, PILI…VAVA, THLA…AMDL, LSFV…WVMG, TAST…VKNG, and VGDV…LDQM. The ABC transporter domain occupies 335-569; it reads VEFRNINFGF…GGRFTSLLRT (235 aa). Residue 368–375 coordinates ATP; the sequence is GPTGAGKT.

It belongs to the ABC transporter superfamily. Beta-(1--&gt;2)glucan exporter (TC 3.A.1.108.1) family. Homodimer.

Its subcellular location is the cell inner membrane. The catalysed reaction is [(1-&gt;2)-beta-D-glucosyl](n)(in) + ATP + H2O = [(1-&gt;2)-beta-D-glucosyl](n)(out) + ADP + phosphate + H(+). Its function is as follows. Involved in beta-(1--&gt;2)glucan export which is required for crown gall tumor formation. Transmembrane domains (TMD) form a pore in the inner membrane and the ATP-binding domain (NBD) is responsible for energy generation. This Rhizobium radiobacter (Agrobacterium tumefaciens) protein is Beta-(1--&gt;2)glucan export ATP-binding/permease protein NdvA.